An 895-amino-acid polypeptide reads, in one-letter code: Ral guanine nucleotide dissociation stimulator (895 aa).

Positions 112–237 (KVRTVKAGTL…RAHLLLAQLE (126 aa)) constitute an N-terminal Ras-GEF domain. The segment at 301-324 (SELEPALEPPLDPEPTLAPAPELD) is disordered. Pro residues predominate over residues 307–318 (LEPPLDPEPTLA). The region spanning 367–629 (PPDLVAEQFT…YNLSCELEPP (263 aa)) is the Ras-GEF domain. Disordered regions lie at residues 650-669 (ERRQAPSTELSTSSSAHSKS) and 708-754 (VPES…STTR). 2 stretches are compositionally biased toward low complexity: residues 656–667 (STELSTSSSAHS) and 726–753 (SSPETSGISSASSSTSSSSASTTPVSTT). The Ras-associating domain maps to 779 to 866 (DCCIIRVSLD…YDFILKKRAF (88 aa)). Tyrosine 795 carries the phosphotyrosine modification.

Interacts with RIT1 and RIT2. Interacts with TRAF3. Interacts with HRAS. In terms of processing, phosphorylation of Tyr-795 by MET blocks HRAS binding. Expressed in all tissues examined.

It localises to the cytoplasm. The protein localises to the nucleus. Functions as a guanine nucleotide exchange factor (GEF) activating either RalA or RalB GTPases and plays an important role in intracellular transport. Interacts and acts as an effector molecule for R-Ras, H-Ras, K-Ras, and Rap. During bacterial clearance, recognizes 'Lys-33'-linked polyubiquitinated TRAF3 and subsequently mediates assembly of the exocyst complex. The polypeptide is Ral guanine nucleotide dissociation stimulator (Ralgds) (Rattus norvegicus (Rat)).